Here is a 327-residue protein sequence, read N- to C-terminus: Meiotic coiled-coil protein 6 (327 aa).

Residues 66–188 (DAFERDSTQR…TETKEMNKIK (123 aa)) adopt a coiled-coil conformation. Positions 175 to 199 (RRMETETKEMNKIKPKNDSESDRFK) are enriched in basic and acidic residues. The tract at residues 175–234 (RRMETETKEMNKIKPKNDSESDRFKRNSQSLSQQSPLLDVHSPDNSNHRTMLNINNSSPI) is disordered. Residues 202–212 (SQSLSQQSPLL) show a composition bias toward low complexity. Residues 217 to 232 (PDNSNHRTMLNINNSS) are compositionally biased toward polar residues. Residues 243–297 (NEVKNRISRLQKTFADLENQHHSFQQICQTLRKRLENDSSTTKQRLSKLEEIIRN) adopt a coiled-coil conformation.

In terms of assembly, interacts with alp4, kms1 and mbo1.

It is found in the nucleus. Its subcellular location is the cytoplasm. The protein resides in the cytoskeleton. The protein localises to the microtubule organizing center. It localises to the spindle pole body. Has a role in meiotic nuclear oscillation and recombination. Required to remodel astral microtubules into the 'horsetail' astral array maintaining the 'horsetail' nuclear movement. Promotes homologous paring of chromosomes during this movement. This Schizosaccharomyces pombe (strain 972 / ATCC 24843) (Fission yeast) protein is Meiotic coiled-coil protein 6 (mcp6).